Reading from the N-terminus, the 400-residue chain is Glutamyl-tRNA reductase (400 aa).

Residues 45–48, Ser-103, 108–110, and Gln-114 each bind substrate; these read TCNR and EDQ. Cys-46 functions as the Nucleophile in the catalytic mechanism. 179-184 serves as a coordination point for NADP(+); the sequence is GYGEIG.

The protein belongs to the glutamyl-tRNA reductase family. In terms of assembly, homodimer.

The catalysed reaction is (S)-4-amino-5-oxopentanoate + tRNA(Glu) + NADP(+) = L-glutamyl-tRNA(Glu) + NADPH + H(+). Its pathway is porphyrin-containing compound metabolism; protoporphyrin-IX biosynthesis; 5-aminolevulinate from L-glutamyl-tRNA(Glu): step 1/2. Its function is as follows. Catalyzes the NADPH-dependent reduction of glutamyl-tRNA(Glu) to glutamate 1-semialdehyde (GSA). This Clostridium perfringens (strain SM101 / Type A) protein is Glutamyl-tRNA reductase.